The following is a 186-amino-acid chain: Elongation factor P (186 aa).

It belongs to the elongation factor P family.

It localises to the cytoplasm. It participates in protein biosynthesis; polypeptide chain elongation. Involved in peptide bond synthesis. Stimulates efficient translation and peptide-bond synthesis on native or reconstituted 70S ribosomes in vitro. Probably functions indirectly by altering the affinity of the ribosome for aminoacyl-tRNA, thus increasing their reactivity as acceptors for peptidyl transferase. The polypeptide is Elongation factor P (Prochlorococcus marinus (strain MIT 9515)).